Here is a 287-residue protein sequence, read N- to C-terminus: 3-beta-hydroxysteroid sulfotransferase (287 aa).

44-49 (KSGTNW) contributes to the 3'-phosphoadenylyl sulfate binding site. 2 residues coordinate substrate: Trp-72 and Trp-77. His-99 (proton acceptor) is an active-site residue. 3'-phosphoadenylyl sulfate contacts are provided by residues Arg-121, Ser-129, Tyr-184, 218 to 223 (SSFKFM), and 247 to 249 (RKG).

This sequence belongs to the sulfotransferase 1 family. As to quaternary structure, homodimer. Liver, intestine and kidney.

The protein localises to the cytoplasm. It catalyses the reaction an alcohol + 3'-phosphoadenylyl sulfate = an alkyl sulfate + adenosine 3',5'-bisphosphate + H(+). Its function is as follows. Sulfotransferase that utilizes 3'-phospho-5'-adenylyl sulfate (PAPS) as sulfonate donor to catalyze the sulfonation of 3-beta-hydroxyl groups of neutral steroids. High preference for C21 steroid (pregnenolone). The protein is 3-beta-hydroxysteroid sulfotransferase (STD2) of Cavia porcellus (Guinea pig).